The sequence spans 197 residues: uncharacterized protein (197 aa).

This sequence belongs to the methyltransferase superfamily.

This is an uncharacterized protein from Mycobacterium bovis (strain ATCC BAA-935 / AF2122/97).